The following is a 47-amino-acid chain: MAVLKAIKIEDRDGEILFRCPRCGMVFRSAKAYTRHVNKAHGHLFRK.

A C2H2-type zinc finger spans residues 18–41; that stretch reads FRCPRCGMVFRSAKAYTRHVNKAH. The Zn(2+) site is built by Cys-20, Cys-23, His-36, and His-41.

As to quaternary structure, crystallized in association with 70S ribosomes. Zn(2+) is required as a cofactor.

The sequence is that of Zinc-finger protein TK0143 from Thermococcus kodakarensis (strain ATCC BAA-918 / JCM 12380 / KOD1) (Pyrococcus kodakaraensis (strain KOD1)).